The primary structure comprises 453 residues: mRNA cleavage and polyadenylation factor CLP1 (453 aa).

Residues Glu31, Lys70, and 146–151 each bind ATP; that span reads NSGKTS.

The protein belongs to the Clp1 family. Clp1 subfamily. Component of a pre-mRNA cleavage factor complex. Interacts directly with PCF11.

The protein resides in the nucleus. Required for endonucleolytic cleavage during polyadenylation-dependent pre-mRNA 3'-end formation. The sequence is that of mRNA cleavage and polyadenylation factor CLP1 from Scheffersomyces stipitis (strain ATCC 58785 / CBS 6054 / NBRC 10063 / NRRL Y-11545) (Yeast).